The chain runs to 132 residues: Small ribosomal subunit protein uS8 (132 aa).

This sequence belongs to the universal ribosomal protein uS8 family. As to quaternary structure, part of the 30S ribosomal subunit. Contacts proteins S5 and S12.

In terms of biological role, one of the primary rRNA binding proteins, it binds directly to 16S rRNA central domain where it helps coordinate assembly of the platform of the 30S subunit. The sequence is that of Small ribosomal subunit protein uS8 from Lactococcus lactis subsp. cremoris (strain MG1363).